Consider the following 297-residue polypeptide: Myozenin-1 (297 aa).

The disordered stretch occupies residues 1-34 (MPLSGTPAPNKKRKSSKLIMELTGGGQESSGLNL). Ser-82 carries the post-translational modification Phosphoserine. Residues 105-172 (FSYSKSSGGG…ALPDNQAGGE (68 aa)) are disordered. A compositionally biased stretch (low complexity) spans 118–128 (RSGSAGQYGSD). The span at 136–162 (SGSGSGSGSGPGSGGAGGPGGHSGRGG) shows a compositional bias: gly residues.

Belongs to the myozenin family. In terms of assembly, interacts with ACTN2, ACTN3, FLNA, FLNB, FLNC, LDB3, PPP3CA and TCAP. Interacts via its C-terminal region with MYOT.

The protein localises to the nucleus. It is found in the cell projection. Its subcellular location is the pseudopodium. Myozenins may serve as intracellular binding proteins involved in linking Z-disk proteins such as alpha-actinin, gamma-filamin, TCAP/telethonin, LDB3/ZASP and localizing calcineurin signaling to the sarcomere. Plays an important role in the modulation of calcineurin signaling. May play a role in myofibrillogenesis. The sequence is that of Myozenin-1 (MYOZ1) from Bos taurus (Bovine).